The following is a 119-amino-acid chain: Large ribosomal subunit protein bL20c (119 aa).

Belongs to the bacterial ribosomal protein bL20 family.

It localises to the plastid. The protein localises to the chloroplast. Its function is as follows. Binds directly to 23S ribosomal RNA and is necessary for the in vitro assembly process of the 50S ribosomal subunit. It is not involved in the protein synthesizing functions of that subunit. The protein is Large ribosomal subunit protein bL20c (rpl20) of Oryza sativa (Rice).